A 342-amino-acid chain; its full sequence is Serpentine receptor class beta-16 (342 aa).

The Extracellular portion of the chain corresponds to 1–22; sequence MDRELIEICKENSATAFSVGYQ. A helical membrane pass occupies residues 23-43; sequence IVYLIYVVLSVTSIFTCSYFI. Over 44-61 the chain is Cytoplasmic; that stretch reads KTFIWNSTFHPNFKLLLT. Residues 62–82 form a helical membrane-spanning segment; that stretch reads MYFFAAIFHSFLFTASYLMMI. At 83–102 the chain is on the extracellular side; that stretch reads ERFLDYQTDCDIHVSMVPYA. The helical transmembrane segment at 103 to 123 threads the bilayer; that stretch reads IVHSSIACCLFCGMLTQVFMV. At 124–141 the chain is on the cytoplasmic side; that stretch reads IERLLATIKIESYEHNTS. A helical transmembrane segment spans residues 142 to 162; the sequence is FWHILAYLFFCIVLPLSLLVW. Residues 163–187 lie on the Extracellular side of the membrane; that stretch reads AYQDADYNSPVITAISPPKGVEIRL. The helical transmembrane segment at 188–208 threads the bilayer; the sequence is NILYIFCFFLAILALILLQVV. Over 209-237 the chain is Cytoplasmic; that stretch reads RFVNKRRESRIEISLSGRFQIVENIDTTT. A helical membrane pass occupies residues 238-258; sequence FISSILIINMIMSVIYIVGTF. Residues 259–274 lie on the Extracellular side of the membrane; it reads TLRNFQFDAFINNQPA. A helical transmembrane segment spans residues 275–295; that stretch reads LATVKTIFYLHPLFSFLMPLI. Over 296-342 the chain is Cytoplasmic; the sequence is SSYHLSKMRERRVKRREHLMAIKTKGREGSDAYNQLLHDQWTQHFLK.

This sequence belongs to the nematode receptor-like protein srb family. As to expression, expressed throughout the nervous system, in pharyngeal muscle, hermaphrodite vulval muscles and in the male tail. Not expressed in male somatic gonads or sperm.

It localises to the cell membrane. The protein localises to the perikaryon. The protein resides in the cell projection. Its subcellular location is the dendrite. G-protein coupled receptor. Plays a role in the navigational capacity of sperm and promotes the targeting of sperm derived from males to the fertilization site in the uterus of hermaphrodites. This Caenorhabditis elegans protein is Serpentine receptor class beta-16.